A 765-amino-acid polypeptide reads, in one-letter code: Probable ATP-dependent RNA helicase DDX27 (765 aa).

The disordered stretch occupies residues 1-48 (MLSELGFIRTIGEDEDVQVEPETDSEDEEEEGPIVLGRKQKALQKNRS). The span at 13–32 (EDEDVQVEPETDSEDEEEEG) shows a compositional bias: acidic residues. 2 positions are modified to phosphoserine: Ser-25 and Ser-48. The Required for interaction with the PEBOW complex signature appears at 55-57 (FVF). The disordered stretch occupies residues 88 to 148 (EKIEKVRKKR…ESETDYSSAD (61 aa)). A compositionally biased stretch (basic and acidic residues) spans 98 to 119 (KTEDKEAKSGKSEKEKEAKEGS). Ser-135 and Ser-146 each carry phosphoserine. Positions 164–169 (KKKKKK) match the Nuclear localization signal motif. The Q motif motif lies at 187-215 (LSFQDMNLSRPLLKAITAMGFKQPTPIQK). In terms of domain architecture, Helicase ATP-binding spans 218–392 (IPVGLLGKDI…SVSLKNPVRI (175 aa)). Residue 231 to 238 (AATGTGKT) coordinates ATP. The DEAD box motif lies at 340–343 (DEAD). Residues 426-572 (LLMRTFTDHV…DVILKFRDKI (147 aa)) enclose the Helicase C-terminal domain. Basic residues-rich tracts occupy residues 685-694 (KRNRRAKRAR) and 744-765 (LGLPHQRRGGNFKSKSRYKRRK). The interval 685–765 (KRNRRAKRAR…KSKSRYKRRK (81 aa)) is disordered.

The protein belongs to the DEAD box helicase family. DDX27/DRS1 subfamily. As to quaternary structure, associates with PeBoW complex, composed of BOP1, PES1 and WDR12. Interacts directly with BOP1 and PES1.

Its subcellular location is the nucleus. It is found in the nucleolus. The protein resides in the chromosome. It catalyses the reaction ATP + H2O = ADP + phosphate + H(+). Its function is as follows. Probable ATP-dependent RNA helicase. Component of the nucleolar ribosomal RNA (rRNA) processing machinery that regulates 3' end formation of ribosomal 47S rRNA. This chain is Probable ATP-dependent RNA helicase DDX27 (DDX27), found in Bos taurus (Bovine).